Here is a 126-residue protein sequence, read N- to C-terminus: Histone H2B type 1-B (126 aa).

A compositionally biased stretch (low complexity) spans 1–12 (MPEPSKSAPAPK). Positions 1–35 (MPEPSKSAPAPKKGSKKAITKAQKKDGKKRKRSRK) are disordered. Position 2 is an N-acetylproline (Pro-2). Residue Glu-3 is modified to ADP-ribosyl glutamic acid. Lys-6 carries the post-translational modification N6-(2-hydroxyisobutyryl)lysine; alternate. Lys-6 is modified (N6-(beta-hydroxybutyryl)lysine; alternate). At Lys-6 the chain carries N6-acetyllysine; alternate. Lys-6 is subject to N6-butyryllysine; alternate. Lys-6 carries the post-translational modification N6-crotonyllysine; alternate. Lys-6 is subject to N6-lactoyllysine; alternate. A Glycyl lysine isopeptide (Lys-Gly) (interchain with G-Cter in SUMO2); alternate cross-link involves residue Lys-6. ADP-ribosylserine is present on Ser-7. Lys-12 carries the N6-(beta-hydroxybutyryl)lysine; alternate modification. An N6-acetyllysine; alternate mark is found at Lys-12 and Lys-13. N6-crotonyllysine; alternate is present on residues Lys-12 and Lys-13. Lys-12 carries the N6-lactoyllysine; alternate modification. Lys-13 bears the N6-(2-hydroxyisobutyryl)lysine; alternate mark. At Ser-15 the chain carries Phosphoserine; by STK4/MST1. N6-acetyllysine; alternate is present on residues Lys-16, Lys-17, Lys-21, and Lys-24. N6-crotonyllysine; alternate is present on residues Lys-16, Lys-17, Lys-21, and Lys-24. Residues Lys-16, Lys-17, Lys-21, and Lys-24 each carry the N6-lactoyllysine; alternate modification. Residues Lys-17 and Lys-21 each carry the N6-(beta-hydroxybutyryl)lysine; alternate modification. Lys-17 carries the N6-glutaryllysine; alternate modification. An N6-(2-hydroxyisobutyryl)lysine; alternate mark is found at Lys-21 and Lys-24. Lys-21 carries the post-translational modification N6-butyryllysine; alternate. Residue Lys-21 forms a Glycyl lysine isopeptide (Lys-Gly) (interchain with G-Cter in SUMO2); alternate linkage. N6-(2-hydroxyisobutyryl)lysine is present on Lys-25. Lys-35 carries the post-translational modification N6-(2-hydroxyisobutyryl)lysine; alternate. Position 35 is an N6-(beta-hydroxybutyryl)lysine; alternate (Lys-35). Lys-35 bears the N6-crotonyllysine; alternate mark. Position 35 is an N6-glutaryllysine; alternate (Lys-35). An N6-succinyllysine; alternate modification is found at Lys-35. Lys-35 is covalently cross-linked (Glycyl lysine isopeptide (Lys-Gly) (interchain with G-Cter in ubiquitin); alternate). Glu-36 is modified (polyADP-ribosyl glutamic acid). Phosphoserine; by AMPK is present on Ser-37. Residues Lys-44, Lys-47, and Lys-58 each carry the N6-(2-hydroxyisobutyryl)lysine; alternate modification. Lys-44 bears the N6-lactoyllysine; alternate mark. An N6-glutaryllysine; alternate mark is found at Lys-44 and Lys-47. Lys-47 carries the N6-methyllysine; alternate modification. Lys-58 carries the N6,N6-dimethyllysine; alternate modification. Residue Arg-80 is modified to Dimethylated arginine. Lys-86 is subject to N6-(2-hydroxyisobutyryl)lysine; alternate. Lys-86 carries the post-translational modification N6-(beta-hydroxybutyryl)lysine; alternate. Position 86 is an N6-acetyllysine; alternate (Lys-86). Lys-86 is modified (N6-lactoyllysine; alternate). Lys-86 carries the N6,N6,N6-trimethyllysine; alternate modification. 2 positions are modified to omega-N-methylarginine: Arg-87 and Arg-93. Position 109 is an N6-(2-hydroxyisobutyryl)lysine; alternate (Lys-109). The residue at position 109 (Lys-109) is an N6-lactoyllysine; alternate. N6-glutaryllysine; alternate is present on Lys-109. Residue Lys-109 is modified to N6-methyllysine; alternate. Ser-113 carries O-linked (GlcNAc) serine glycosylation. Thr-116 bears the Phosphothreonine mark. Lys-117 and Lys-121 each carry N6-(2-hydroxyisobutyryl)lysine; alternate. N6-(beta-hydroxybutyryl)lysine; alternate is present on residues Lys-117 and Lys-121. Lys-117 and Lys-121 each carry N6-lactoyllysine; alternate. An N6-glutaryllysine; alternate mark is found at Lys-117 and Lys-121. Residues Lys-117 and Lys-121 each carry the N6-succinyllysine; alternate modification. At Lys-117 the chain carries N6-malonyllysine; alternate. Lys-117 carries the post-translational modification N6-methylated lysine; alternate. Lys-121 participates in a covalent cross-link: Glycyl lysine isopeptide (Lys-Gly) (interchain with G-Cter in ubiquitin); alternate.

Belongs to the histone H2B family. The nucleosome is a histone octamer containing two molecules each of H2A, H2B, H3 and H4 assembled in one H3-H4 heterotetramer and two H2A-H2B heterodimers. The octamer wraps approximately 147 bp of DNA. Post-translationally, monoubiquitination at Lys-35 (H2BK34Ub) by the MSL1/MSL2 dimer is required for histone H3 'Lys-4' (H3K4me) and 'Lys-79' (H3K79me) methylation and transcription activation at specific gene loci, such as HOXA9 and MEIS1 loci. Similarly, monoubiquitination at Lys-121 (H2BK120Ub) by the RNF20/40 complex gives a specific tag for epigenetic transcriptional activation and is also prerequisite for histone H3 'Lys-4' and 'Lys-79' methylation. It also functions cooperatively with the FACT dimer to stimulate elongation by RNA polymerase II. H2BK120Ub also acts as a regulator of mRNA splicing: deubiquitination by USP49 is required for efficient cotranscriptional splicing of a large set of exons. In terms of processing, phosphorylation at Ser-37 (H2BS36ph) by AMPK in response to stress promotes transcription. Phosphorylated on Ser-15 (H2BS14ph) by STK4/MST1 during apoptosis; which facilitates apoptotic chromatin condensation. Also phosphorylated on Ser-15 in response to DNA double strand breaks (DSBs), and in correlation with somatic hypermutation and immunoglobulin class-switch recombination. GlcNAcylation at Ser-113 promotes monoubiquitination of Lys-121. It fluctuates in response to extracellular glucose, and associates with transcribed genes. Post-translationally, ADP-ribosylated by PARP1 or PARP2 on Ser-7 (H2BS6ADPr) in response to DNA damage. H2BS6ADPr promotes recruitment of CHD1L. Mono-ADP-ribosylated on Glu-3 (H2BE2ADPr) by PARP3 in response to single-strand breaks. Poly ADP-ribosylation on Glu-36 (H2BE35ADPr) by PARP1 regulates adipogenesis: it inhibits phosphorylation at Ser-37 (H2BS36ph), thereby blocking expression of pro-adipogenetic genes. In terms of processing, crotonylation (Kcr) is specifically present in male germ cells and marks testis-specific genes in post-meiotic cells, including X-linked genes that escape sex chromosome inactivation in haploid cells. Crotonylation marks active promoters and enhancers and confers resistance to transcriptional repressors. It is also associated with post-meiotically activated genes on autosomes. Lactylated in macrophages by EP300/P300 by using lactoyl-CoA directly derived from endogenous or exogenous lactate, leading to stimulates gene transcription.

It is found in the nucleus. Its subcellular location is the chromosome. Functionally, core component of nucleosome. Nucleosomes wrap and compact DNA into chromatin, limiting DNA accessibility to the cellular machineries which require DNA as a template. Histones thereby play a central role in transcription regulation, DNA repair, DNA replication and chromosomal stability. DNA accessibility is regulated via a complex set of post-translational modifications of histones, also called histone code, and nucleosome remodeling. In Homo sapiens (Human), this protein is Histone H2B type 1-B.